A 416-amino-acid chain; its full sequence is Bifunctional protein GlmU (416 aa).

The tract at residues 1 to 229 (MTNYAIILAA…FNESLGVNDR (229 aa)) is pyrophosphorylase. UDP-N-acetyl-alpha-D-glucosamine contacts are provided by residues 8 to 11 (LAAG), K22, Q72, and 77 to 78 (GT). Residue D102 participates in Mg(2+) binding. 4 residues coordinate UDP-N-acetyl-alpha-D-glucosamine: G139, E154, N169, and N227. N227 provides a ligand contact to Mg(2+). Residues 230–250 (VALATAETVMRQRITQKHMVN) are linker. The segment at 251–416 (GVTFQNPETV…DSHCTFGSWR (166 aa)) is N-acetyltransferase. Residues R332 and K350 each coordinate UDP-N-acetyl-alpha-D-glucosamine. H362 (proton acceptor) is an active-site residue. Y365 and N376 together coordinate UDP-N-acetyl-alpha-D-glucosamine. Acetyl-CoA is bound by residues A379 and 385–386 (NY).

The protein in the N-terminal section; belongs to the N-acetylglucosamine-1-phosphate uridyltransferase family. It in the C-terminal section; belongs to the transferase hexapeptide repeat family. Homotrimer. It depends on Mg(2+) as a cofactor.

The protein localises to the cytoplasm. The enzyme catalyses alpha-D-glucosamine 1-phosphate + acetyl-CoA = N-acetyl-alpha-D-glucosamine 1-phosphate + CoA + H(+). It carries out the reaction N-acetyl-alpha-D-glucosamine 1-phosphate + UTP + H(+) = UDP-N-acetyl-alpha-D-glucosamine + diphosphate. Its pathway is nucleotide-sugar biosynthesis; UDP-N-acetyl-alpha-D-glucosamine biosynthesis; N-acetyl-alpha-D-glucosamine 1-phosphate from alpha-D-glucosamine 6-phosphate (route II): step 2/2. It functions in the pathway nucleotide-sugar biosynthesis; UDP-N-acetyl-alpha-D-glucosamine biosynthesis; UDP-N-acetyl-alpha-D-glucosamine from N-acetyl-alpha-D-glucosamine 1-phosphate: step 1/1. It participates in bacterial outer membrane biogenesis; LPS lipid A biosynthesis. Catalyzes the last two sequential reactions in the de novo biosynthetic pathway for UDP-N-acetylglucosamine (UDP-GlcNAc). The C-terminal domain catalyzes the transfer of acetyl group from acetyl coenzyme A to glucosamine-1-phosphate (GlcN-1-P) to produce N-acetylglucosamine-1-phosphate (GlcNAc-1-P), which is converted into UDP-GlcNAc by the transfer of uridine 5-monophosphate (from uridine 5-triphosphate), a reaction catalyzed by the N-terminal domain. The chain is Bifunctional protein GlmU from Streptococcus pyogenes serotype M12 (strain MGAS2096).